The chain runs to 289 residues: 4-hydroxy-tetrahydrodipicolinate synthase (289 aa).

T45 is a binding site for pyruvate. Residue Y133 is the Proton donor/acceptor of the active site. K161 functions as the Schiff-base intermediate with substrate in the catalytic mechanism. Residue I200 coordinates pyruvate.

It belongs to the DapA family. As to quaternary structure, homotetramer; dimer of dimers.

The protein resides in the cytoplasm. It catalyses the reaction L-aspartate 4-semialdehyde + pyruvate = (2S,4S)-4-hydroxy-2,3,4,5-tetrahydrodipicolinate + H2O + H(+). It participates in amino-acid biosynthesis; L-lysine biosynthesis via DAP pathway; (S)-tetrahydrodipicolinate from L-aspartate: step 3/4. Catalyzes the condensation of (S)-aspartate-beta-semialdehyde [(S)-ASA] and pyruvate to 4-hydroxy-tetrahydrodipicolinate (HTPA). The sequence is that of 4-hydroxy-tetrahydrodipicolinate synthase from Coxiella burnetii (strain Dugway 5J108-111).